Consider the following 314-residue polypeptide: 2,3-dihydroxyphenylpropionate/2,3-dihydroxicinnamic acid 1,2-dioxygenase (314 aa).

The active-site Proton donor is H115. The active-site Proton acceptor is the H179.

Belongs to the LigB/MhpB extradiol dioxygenase family. As to quaternary structure, homotetramer. It depends on Fe(2+) as a cofactor.

The catalysed reaction is 3-(2,3-dihydroxyphenyl)propanoate + O2 = (2Z,4E)-2-hydroxy-6-oxonona-2,4-dienedioate + H(+). It carries out the reaction (2E)-3-(2,3-dihydroxyphenyl)prop-2-enoate + O2 = (2Z,4E,7E)-2-hydroxy-6-oxonona-2,4,7-trienedioate + H(+). It functions in the pathway aromatic compound metabolism; 3-phenylpropanoate degradation. Functionally, catalyzes the non-heme iron(II)-dependent oxidative cleavage of 2,3-dihydroxyphenylpropionic acid and 2,3-dihydroxicinnamic acid into 2-hydroxy-6-ketononadienedioate and 2-hydroxy-6-ketononatrienedioate, respectively. This Escherichia coli O157:H7 protein is 2,3-dihydroxyphenylpropionate/2,3-dihydroxicinnamic acid 1,2-dioxygenase.